A 147-amino-acid chain; its full sequence is Large ribosomal subunit protein uL22c (147 aa).

It belongs to the universal ribosomal protein uL22 family. As to quaternary structure, part of the 50S ribosomal subunit.

Its subcellular location is the plastid. The protein localises to the chloroplast. Functionally, this protein binds specifically to 23S rRNA. The globular domain of the protein is located near the polypeptide exit tunnel on the outside of the subunit, while an extended beta-hairpin is found that lines the wall of the exit tunnel in the center of the 70S ribosome. The polypeptide is Large ribosomal subunit protein uL22c (rpl22) (Lolium perenne (Perennial ryegrass)).